The chain runs to 143 residues: Putative pre-16S rRNA nuclease (143 aa).

This sequence belongs to the YqgF nuclease family.

The protein resides in the cytoplasm. Could be a nuclease involved in processing of the 5'-end of pre-16S rRNA. This chain is Putative pre-16S rRNA nuclease, found in Mycoplasma capricolum subsp. capricolum (strain California kid / ATCC 27343 / NCTC 10154).